A 78-amino-acid polypeptide reads, in one-letter code: Acyl carrier protein (78 aa).

A Carrier domain is found at 2–77 (SEIASRVKAI…DAVSYIEANA (76 aa)). The residue at position 37 (serine 37) is an O-(pantetheine 4'-phosphoryl)serine.

It belongs to the acyl carrier protein (ACP) family. Post-translationally, 4'-phosphopantetheine is transferred from CoA to a specific serine of apo-ACP by AcpS. This modification is essential for activity because fatty acids are bound in thioester linkage to the sulfhydryl of the prosthetic group.

It is found in the cytoplasm. The protein operates within lipid metabolism; fatty acid biosynthesis. In terms of biological role, carrier of the growing fatty acid chain in fatty acid biosynthesis. In Phocaeicola vulgatus (strain ATCC 8482 / DSM 1447 / JCM 5826 / CCUG 4940 / NBRC 14291 / NCTC 11154) (Bacteroides vulgatus), this protein is Acyl carrier protein.